The chain runs to 813 residues: MGESNTAAPPSRSRSLSASIKGLFGKNSISSNEINGKKEAFVQSGTREDQRYNEEHHLKKIDTKASVPKKDTQLSPLSAPGSYLKKSTSIASSLHLNSGKQSVTSSRAQSISSDGNGFLSQESFISEEHEDDIDDTTYYDKSTRGFTNLSKEVESYSISRKNSIQQSRKASVDDNEVDKRNAHFPDSDTTIDSVLGDKNKNQKVMNQINSISNISRSGSVPANPPILSSKSRRGSNAMSIRSPSVRSTASIVSGNSNSEVITPSSKPATQNISEDGNIKKTDNTLKCVINSKHFKVYENGFHEHHLPVIDLVKGDSTDSLNSSTVSKGTEGIEINRQKSSFSLTGIFKKKNGDKMNELLDTEPFGNASSLMPTKAFCPRYKTKDGSMIEEPLEQETTHKKIPKIVNPYAAVGSEELKLITTLSDKIKKGLKNKDGQSRSGSQSGSASSSLHTSPVASSTSLSSKFHHALVTCSEKYGDPVGVIGHGTYGVVRVCSRPLLISDSAPFPSYCNDKKLFFAIKVLKPKDDEQLEKFSTRVTSEFIIGHSLSRRHKAHALQNKVCPSKRLAHKAQRKLDWECPNILRVIDLMETNNTFIEVMELCPAGDLHSLLVSRSQSGNAIGSLHPLEADCFMKQLLRGVQYMHDHGIAHCDLKPENLLFHPNGLLKICDFGTSSVFQTAWEKHVHFQNGVIGSEPYVAPEVFQLGKDYDPRLIDCWSCGIVYCTMVFGQYLWKIAIENKDSLYASFISQMKDENQFSLFEELRHVNADLNKLRKNVLYNMFQTNPEKRITVDKILHSSWMKHTRCCVSYNHSV.

4 disordered regions span residues Asn-27 to Tyr-83, His-95 to Gly-117, Ser-157 to Asn-277, and Gly-429 to Val-455. Over residues Asn-35–Thr-72 the composition is skewed to basic and acidic residues. The span at Ser-157–Lys-169 shows a compositional bias: polar residues. Residues Val-177–Asp-186 are compositionally biased toward basic and acidic residues. Residues Asn-206–Ser-219 are compositionally biased toward low complexity. Positions Ile-226–Glu-274 are enriched in polar residues. Over residues Ser-437 to Val-455 the composition is skewed to low complexity. Positions Gly-477–Met-800 constitute a Protein kinase domain. ATP contacts are provided by residues Ile-483 to Val-491 and Lys-520. Asp-651 acts as the Proton acceptor in catalysis.

Belongs to the protein kinase superfamily. CAMK Ser/Thr protein kinase family. NPR/HAL subfamily. HAL5 sub-subfamily.

The enzyme catalyses L-seryl-[protein] + ATP = O-phospho-L-seryl-[protein] + ADP + H(+). The catalysed reaction is L-threonyl-[protein] + ATP = O-phospho-L-threonyl-[protein] + ADP + H(+). In terms of biological role, protein kinase involved in salt tolerance and pH sensitivity, probably by regulating plasma membrane potential and cation influx. Positively controls the TRK1 potassium transport system in response to potassium starvation. Stabilizes plasma membrane nutrient transporters in the plasma membrane by preventing their vacuolar sorting and degradation. In Candida glabrata (strain ATCC 2001 / BCRC 20586 / JCM 3761 / NBRC 0622 / NRRL Y-65 / CBS 138) (Yeast), this protein is Serine/threonine-protein kinase HAL5 (HAL5).